A 407-amino-acid chain; its full sequence is Na(+)-translocating NADH-quinone reductase subunit F (407 aa).

Residues 3–23 form a helical membrane-spanning segment; the sequence is IILGVVMFTLIVLALVLVILF. One can recognise a 2Fe-2S ferredoxin-type domain in the interval 32-126; that stretch reads GDITISINGD…DMDIELPEEI (95 aa). [2Fe-2S] cluster contacts are provided by Cys-69, Cys-75, Cys-78, and Cys-110. The FAD-binding FR-type domain occupies 129–269; sequence VKKWECTVIS…SGPFGEFFAK (141 aa). The interval 272–389 is catalytic; sequence DAEMVFIGGG…PMMNAAVIGM (118 aa).

It belongs to the NqrF family. As to quaternary structure, composed of six subunits; NqrA, NqrB, NqrC, NqrD, NqrE and NqrF. Requires [2Fe-2S] cluster as cofactor. FAD serves as cofactor.

It localises to the cell inner membrane. The catalysed reaction is a ubiquinone + n Na(+)(in) + NADH + H(+) = a ubiquinol + n Na(+)(out) + NAD(+). NQR complex catalyzes the reduction of ubiquinone-1 to ubiquinol by two successive reactions, coupled with the transport of Na(+) ions from the cytoplasm to the periplasm. The first step is catalyzed by NqrF, which accepts electrons from NADH and reduces ubiquinone-1 to ubisemiquinone by a one-electron transfer pathway. The polypeptide is Na(+)-translocating NADH-quinone reductase subunit F (Vibrio anguillarum (Listonella anguillarum)).